The chain runs to 255 residues: Trypsin alpha-4 (255 aa).

A signal peptide spans 1–16 (MLKFVVLLCAISCALG). Positions 17–30 (AAVPEGMVPQLDGR) are cleaved as a propeptide — activation peptide. In terms of domain architecture, Peptidase S1 spans 31–253 (IVGGVATTIS…LRTWVVSAAS (223 aa)). A disulfide bridge links cysteine 56 with cysteine 72. Catalysis depends on charge relay system residues histidine 71 and aspartate 116. 2 disulfide bridges follow: cysteine 179–cysteine 196 and cysteine 205–cysteine 229. Residue serine 209 is the Charge relay system of the active site.

The protein belongs to the peptidase S1 family.

The protein localises to the secreted. It is found in the extracellular space. It carries out the reaction Preferential cleavage: Arg-|-Xaa, Lys-|-Xaa.. In Lucilia cuprina (Green bottle fly), this protein is Trypsin alpha-4.